The sequence spans 180 residues: Inner membrane-spanning protein YciB (180 aa).

5 helical membrane passes run glutamine 25–isoleucine 45, valine 49–isoleucine 69, isoleucine 76–isoleucine 96, isoleucine 118–valine 138, and phenylalanine 150–leucine 170.

The protein belongs to the YciB family.

The protein resides in the cell inner membrane. Functionally, plays a role in cell envelope biogenesis, maintenance of cell envelope integrity and membrane homeostasis. This Rickettsia akari (strain Hartford) protein is Inner membrane-spanning protein YciB.